Consider the following 680-residue polypeptide: E3 ubiquitin-protein ligase brl2 (680 aa).

Positions 44–72 form a coiled coil; that stretch reads RSIQFDELESKIEGLQNLAEEKLKVLATL. The disordered stretch occupies residues 206–233; it reads PQSTKVKEEATTSSKGKDEEKKVSTVEQ. A compositionally biased stretch (basic and acidic residues) spans 210-229; sequence KVKEEATTSSKGKDEEKKVS. Coiled coils occupy residues 261–288, 353–399, and 485–609; these read LDSNVNEMDKLIMERENALNNVETTNLK, MQND…ETMV, and DSLH…LKDT. The RING-type zinc-finger motif lies at 627–667; sequence CSVCNFERWKDRIISLCGHGFCYQCIQKRIETRQRRCPICG.

It belongs to the BRE1 family. As to quaternary structure, component of the histone H2B ubiquitin ligase complex (HULC) composed of at least brl1, brl2, rhp6 and shf1.

The protein resides in the nucleus. The enzyme catalyses S-ubiquitinyl-[E2 ubiquitin-conjugating enzyme]-L-cysteine + [acceptor protein]-L-lysine = [E2 ubiquitin-conjugating enzyme]-L-cysteine + N(6)-ubiquitinyl-[acceptor protein]-L-lysine.. The protein operates within protein modification; protein ubiquitination. In terms of biological role, E3 ubiquitin-protein ligase which belongs to the histone H2B ubiquitin ligase complex (HULC) which mediates monoubiquitination of histone H2B to form H2BK123ub1. H2BK123ub1 gives a specific tag for epigenetic transcriptional activation and is also a prerequisite for H3K4me and H3K79me formation. In Schizosaccharomyces pombe (strain 972 / ATCC 24843) (Fission yeast), this protein is E3 ubiquitin-protein ligase brl2 (brl2).